A 103-amino-acid chain; its full sequence is Cell division suppressor protein YneA (103 aa).

The LysM domain maps to 36–87; sequence VKIKVQDGDTLWSLADHVAEKKHINKEDFIEWVTENNHLQTADIKPGDELIL.

This sequence belongs to the YneA family.

The protein localises to the cytoplasm. Inhibits cell division during the SOS response. Affects a later stage of the cell division protein assembly, after the assembly of the Z ring, by probably suppressing recruitment of FtsL and/or DivIC to the division machinery. In Bacillus velezensis (strain DSM 23117 / BGSC 10A6 / LMG 26770 / FZB42) (Bacillus amyloliquefaciens subsp. plantarum), this protein is Cell division suppressor protein YneA.